Consider the following 626-residue polypeptide: Endo-1,3(4)-beta-glucanase xgeA (626 aa).

The first 25 residues, 1–25 (MSSSLMRRVGSLAASAIIFPGIAHA), serve as a signal peptide directing secretion. The 254-residue stretch at 33–286 (ESWEGEKILN…WAGGVFGDSG (254 aa)) folds into the GH16 domain. A glycan (N-linked (GlcNAc...) asparagine) is linked at asparagine 61. Residue glutamate 142 is the Nucleophile of the active site. Glutamate 147 acts as the Proton donor in catalysis. Residues 477 to 494 (ASTDAAAATTPAAEPHPS) are compositionally biased toward low complexity. Residues 477-533 (ASTDAAAATTPAAEPHPSNAETPADSKSSADAVTAQATKTTIAVNTPNPATDSASSV) are disordered. Over residues 495 to 533 (NAETPADSKSSADAVTAQATKTTIAVNTPNPATDSASSV) the composition is skewed to polar residues. The GPI-anchor amidated glycine moiety is linked to residue glycine 603. The propeptide at 604-626 (VGSKVSISASVAIAAFVMLLLVN) is removed in mature form.

This sequence belongs to the glycosyl hydrolase 16 family.

Its subcellular location is the cell membrane. The catalysed reaction is Endohydrolysis of (1-&gt;3)- or (1-&gt;4)-linkages in beta-D-glucans when the glucose residue whose reducing group is involved in the linkage to be hydrolyzed is itself substituted at C-3.. Mixed-linked glucanase involved in the degradation of complex natural cellulosic substrates. Active on laminarin. lichenan, soluble carboxymethyl cellulose but not on pustulan. This is Endo-1,3(4)-beta-glucanase xgeA (xgeA) from Emericella nidulans (strain FGSC A4 / ATCC 38163 / CBS 112.46 / NRRL 194 / M139) (Aspergillus nidulans).